A 225-amino-acid polypeptide reads, in one-letter code: Protein YIP4 (225 aa).

Residues Ser27 and Ser28 each carry the phosphoserine modification. 5 helical membrane-spanning segments follow: residues 91–111, 118–138, 154–176, 180–199, and 205–225; these read WDLW…ALST, SVFT…SLNI, LGYS…LIFI, VIVA…LQNS, and KLLA…IIFL.

Belongs to the YIP1 family. In terms of assembly, interacts with the YIP1 family members yip1 and yip5, and with several Rab GTPases.

It localises to the membrane. In terms of biological role, may be involved in proper membrane localization of Rab GTPases. In Schizosaccharomyces pombe (strain 972 / ATCC 24843) (Fission yeast), this protein is Protein YIP4.